A 583-amino-acid polypeptide reads, in one-letter code: Ankyrin repeat and SOCS box protein 15 (583 aa).

ANK repeat units lie at residues 75-104, 110-139, 143-172, 176-205, 209-238, 242-271, 275-304, 307-336, 349-378, 379-408, and 416-444; these read KGWF…KTLW, DGET…WPNT, KGET…SLDQ, KRWS…NVHL, FGVT…DVFA, DGAS…SGNV, AGHL…KHAI, SGLT…DVNA, ERKT…DPNL, DPLN…NVNC, and TRFP…QVEL. In terms of domain architecture, SOCS box spans 524–579; that stretch reads WPEIRQIIENPCSLKHLCRLKIRRVMGLQRLCQPASIQMLPLPAAMRRYLLFKEFD.

Belongs to the ankyrin SOCS box (ASB) family.

Its pathway is protein modification; protein ubiquitination. Its function is as follows. May be a substrate-recognition component of a SCF-like ECS (Elongin-Cullin-SOCS-box protein) E3 ubiquitin-protein ligase complex which mediates the ubiquitination and subsequent proteasomal degradation of target proteins. This chain is Ankyrin repeat and SOCS box protein 15 (Asb15), found in Mus musculus (Mouse).